The primary structure comprises 780 residues: Tricorn protease-interacting factor F3 (780 aa).

Residues glutamate 101 and 230 to 234 (GAMEN) each bind substrate. Residue histidine 265 coordinates Zn(2+). Glutamate 266 acts as the Proton acceptor in catalysis. Residues histidine 269 and glutamate 288 each coordinate Zn(2+).

Belongs to the peptidase M1 family. Part of the tricorn proteolytic complex. Requires Zn(2+) as cofactor.

It is found in the cytoplasm. In terms of biological role, proteases F1, F2 and F3 degrade oligopeptides produced by Tricorn (themselves probably produced by the proteasome), yielding free amino acids. The chain is Tricorn protease-interacting factor F3 (trf3) from Thermoplasma acidophilum (strain ATCC 25905 / DSM 1728 / JCM 9062 / NBRC 15155 / AMRC-C165).